The following is a 296-amino-acid chain: Myeloid differentiation primary response protein MyD88 (296 aa).

The region spanning 54-109 (MDFEYLEIRQLETQADPTGRLLDAWQGRPGASVGRLLELLTKLGRDDVLLELGPSI) is the Death domain. Residues 110–155 (EEDCQKYILKQQQEEAEKPLQVAAVDSSVPRTAELAGITTLDDPLG) are intermediate domain. The TIR domain maps to 159–293 (ERFDAFICYC…WFWTRLAKAL (135 aa)). Serine 244 carries the phosphoserine modification.

As to quaternary structure, homodimer. Also forms heterodimers with TIRAP. Binds to TLR2, TLR5, IRAK1, IRAK2 and IRAK4 via their respective TIR domains. Interacts with IL18R1. Interacts with BMX, IL1RL1, IKBKE and IRF7. Interacts with LRRFIP1 and LRRFIP2; this interaction positively regulates Toll-like receptor (TLR) signaling in response to agonist. Interacts with FLII. LRRFIP1 and LRRFIP2 compete with FLII for MYD88-binding. Interacts with IRF1. Upon IL1B treatment, forms a complex with PELI1, IRAK1, IRAK4 and TRAF6; this complex recruits MAP3K7/TAK1, TAB1 and TAB2 to mediate NF-kappa-B activation. Direct binding of SMAD6 to PELI1 prevents the complex formation and hence negatively regulates IL1R-TLR signaling and eventually NF-kappa-B-mediated gene expression. May interact with PIK3AP1. Interacts (via TIR domain) with DHX9 (via H2A and OB-fold regions); this interaction is direct. Interacts with OTUD4 deubiquitinase; the interaction is direct. Interacts with TLR4. In terms of assembly, (Microbial infection) In case of infection, interacts with uropathogenic E.coli protein TcpC; suppressing Toll-like receptor (TLR)-mediated cytokine production. (Microbial infection) In case of infection, interacts with uropathogenic E.faecalis protein TcpF; suppressing Toll-like receptor (TLR)-mediated cytokine production. As to quaternary structure, (Microbial infection) In case of infection, interacts with B.melitensis protein TcpB. In terms of assembly, (Microbial infection) Interacts with human metapneumovirus protein M2-2; this interaction prevents MYD88-mediated cytokine secretion. In terms of processing, ubiquitinated; undergoes 'Lys-63'-linked polyubiquitination. OTUD4 specifically hydrolyzes 'Lys-63'-linked polyubiquitinated MYD88. Deubiquitinated by USP3 that cleaves 'Lys-63'-linked ubiquitin chains leading to inhibition of MYD88-induced NF-kappa-B signaling. Post-translationally, (Microbial infection) Ubiquitinated by human herpesvirus 8 (KSHV) protein RTA/ORF50, leading to proteasomal degradation ans suppression of TLR4 signaling pathway. Ubiquitous.

It localises to the cytoplasm. It is found in the nucleus. In terms of biological role, adapter protein involved in the Toll-like receptor and IL-1 receptor signaling pathway in the innate immune response. Acts via IRAK1, IRAK2, IRF7 and TRAF6, leading to NF-kappa-B activation, cytokine secretion and the inflammatory response. Increases IL-8 transcription. Involved in IL-18-mediated signaling pathway. Activates IRF1 resulting in its rapid migration into the nucleus to mediate an efficient induction of IFN-beta, NOS2/INOS, and IL12A genes. Upon TLR8 activation by GU-rich single-stranded RNA (GU-rich RNA) derived from viruses such as SARS-CoV-2, SARS-CoV and HIV-1, induces IL1B release through NLRP3 inflammasome activation. MyD88-mediated signaling in intestinal epithelial cells is crucial for maintenance of gut homeostasis and controls the expression of the antimicrobial lectin REG3G in the small intestine. The polypeptide is Myeloid differentiation primary response protein MyD88 (Homo sapiens (Human)).